Here is an 891-residue protein sequence, read N- to C-terminus: DNA mismatch repair protein MutS (891 aa).

643 to 650 is an ATP binding site; sequence GPNMGGKS.

Belongs to the DNA mismatch repair MutS family.

In terms of biological role, this protein is involved in the repair of mismatches in DNA. It is possible that it carries out the mismatch recognition step. This protein has a weak ATPase activity. The chain is DNA mismatch repair protein MutS from Xanthomonas campestris pv. campestris (strain ATCC 33913 / DSM 3586 / NCPPB 528 / LMG 568 / P 25).